We begin with the raw amino-acid sequence, 318 residues long: Malate dehydrogenase (318 aa).

NAD(+)-binding positions include 10 to 15 (GAGNIG) and Asp-34. Residues Arg-83 and Arg-89 each coordinate substrate. NAD(+) is bound by residues Asn-96 and 119–121 (ITN). Positions 121 and 152 each coordinate substrate. The active-site Proton acceptor is His-176.

Belongs to the LDH/MDH superfamily. MDH type 3 family.

It carries out the reaction (S)-malate + NAD(+) = oxaloacetate + NADH + H(+). Functionally, catalyzes the reversible oxidation of malate to oxaloacetate. The chain is Malate dehydrogenase from Rhodospirillum rubrum (strain ATCC 11170 / ATH 1.1.1 / DSM 467 / LMG 4362 / NCIMB 8255 / S1).